A 397-amino-acid chain; its full sequence is Diphosphomevalonate decarboxylase (397 aa).

Residues 19–22 (YWGK), Arg-74, 153–158 (SGSACR), and Thr-209 each bind (R)-5-diphosphomevalonate. The tract at residues 378 to 397 (GPGPQDTKSSLIDPETGLPR) is disordered.

The protein belongs to the diphosphomevalonate decarboxylase family. Homodimer.

It carries out the reaction (R)-5-diphosphomevalonate + ATP = isopentenyl diphosphate + ADP + phosphate + CO2. It participates in isoprenoid biosynthesis; isopentenyl diphosphate biosynthesis via mevalonate pathway; isopentenyl diphosphate from (R)-mevalonate: step 3/3. Functionally, diphosphomevalonate decarboxylase; part of the second module of ergosterol biosynthesis pathway that includes the middle steps of the pathway. The second module is carried out in the vacuole and involves the formation of farnesyl diphosphate, which is also an important intermediate in the biosynthesis of ubiquinone, dolichol, heme and prenylated proteins. Activity by the mevalonate kinase ERG12 first converts mevalonate into 5-phosphomevalonate. 5-phosphomevalonate is then further converted to 5-diphosphomevalonate by the phosphomevalonate kinase ERG8. The diphosphomevalonate decarboxylase MVD1/ERG19 then produces isopentenyl diphosphate. The isopentenyl-diphosphate delta-isomerase IDI1 then catalyzes the 1,3-allylic rearrangement of the homoallylic substrate isopentenyl (IPP) to its highly electrophilic allylic isomer, dimethylallyl diphosphate (DMAPP). Finally the farnesyl diphosphate synthase ERG20 catalyzes the sequential condensation of isopentenyl pyrophosphate with dimethylallyl pyrophosphate, and then with the resultant geranylpyrophosphate to the ultimate product farnesyl pyrophosphate. The chain is Diphosphomevalonate decarboxylase from Eremothecium gossypii (strain ATCC 10895 / CBS 109.51 / FGSC 9923 / NRRL Y-1056) (Yeast).